Reading from the N-terminus, the 343-residue chain is Aspartate carbamoyltransferase catalytic subunit (343 aa).

Carbamoyl phosphate-binding residues include Arg-91 and Thr-92. Position 119 (Lys-119) interacts with L-aspartate. Arg-141, His-171, and Gln-174 together coordinate carbamoyl phosphate. L-aspartate-binding residues include Arg-204 and Arg-259. Residues Gly-300 and Pro-301 each coordinate carbamoyl phosphate.

This sequence belongs to the aspartate/ornithine carbamoyltransferase superfamily. ATCase family. Heterododecamer (2C3:3R2) of six catalytic PyrB chains organized as two trimers (C3), and six regulatory PyrI chains organized as three dimers (R2).

The catalysed reaction is carbamoyl phosphate + L-aspartate = N-carbamoyl-L-aspartate + phosphate + H(+). It functions in the pathway pyrimidine metabolism; UMP biosynthesis via de novo pathway; (S)-dihydroorotate from bicarbonate: step 2/3. Catalyzes the condensation of carbamoyl phosphate and aspartate to form carbamoyl aspartate and inorganic phosphate, the committed step in the de novo pyrimidine nucleotide biosynthesis pathway. The sequence is that of Aspartate carbamoyltransferase catalytic subunit from Burkholderia ambifaria (strain MC40-6).